A 130-amino-acid polypeptide reads, in one-letter code: Small ribosomal subunit protein uS11 (130 aa).

Belongs to the universal ribosomal protein uS11 family. In terms of assembly, part of the 30S ribosomal subunit. Interacts with proteins S7 and S18. Binds to IF-3.

Functionally, located on the platform of the 30S subunit, it bridges several disparate RNA helices of the 16S rRNA. Forms part of the Shine-Dalgarno cleft in the 70S ribosome. The protein is Small ribosomal subunit protein uS11 of Thermosynechococcus vestitus (strain NIES-2133 / IAM M-273 / BP-1).